A 102-amino-acid polypeptide reads, in one-letter code: MADFLKGLPVYNKSNFSRFHADSVCKASNRRPSVYLPTREYPSEQIIVTEKTNILLRYLHQQWDKKNAAKKRDQEQVELEGESSAPPRKVARTDSPDMHEDT.

Ala2 is modified (N-acetylalanine). Residue Ser33 is modified to Phosphoserine. Basic and acidic residues-rich tracts occupy residues 66 to 75 and 91 to 102; these read KNAAKKRDQE and ARTDSPDMHEDT. A disordered region spans residues 66–102; it reads KNAAKKRDQEQVELEGESSAPPRKVARTDSPDMHEDT. At Ser95 the chain carries Phosphoserine.

Belongs to the DDA1 family. Component of numerous DCX (DDB1-CUL4-X-box) E3 ubiquitin-protein ligase complexes which consist of a core of DDB1, cullin-4 (CUL4A or CUL4B), DDA1 and RBX1. Component of the DCX(DCAF15) complex, also named CLR4(DCAF15) complex, composed of DCAF15, DDB1, cullin-4 (CUL4A or CUL4B), DDA1 and RBX1. Part of the DDD core complex containing DET1, DDA1 and DDB1; the DDD core complex recruits a specific UBE2E enzyme, such as UBE2E1, UBE2E2 UBE2E3, to form specific DDD-E2 complexes.

It participates in protein modification; protein ubiquitination. Functionally, functions as a component of numerous distinct DCX (DDB1-CUL4-X-box) E3 ubiquitin-protein ligase complexes which mediate the ubiquitination and subsequent proteasomal degradation of target proteins. In the DCX complexes, acts as a scaffolding subunit required to stabilize the complex. The sequence is that of DET1- and DDB1-associated protein 1 from Bos taurus (Bovine).